The following is a 62-amino-acid chain: Large ribosomal subunit protein uL29 (62 aa).

The protein belongs to the universal ribosomal protein uL29 family.

This is Large ribosomal subunit protein uL29 from Desulfatibacillum aliphaticivorans.